The following is a 631-amino-acid chain: MIRDTATNTTQTQAAPQQAPAQQFTQAPQEKPMQSTQSQPTPSYAGTGGINSQFTRSGNVQGGDARASEALTVFTRLKEQAVAQQDLADDFSILRFDRDQHQVGWSSLVIAKQISLNGQPVIAVRPLILPNNSIELPKRKTNIVNGMQTDVIESDIDVGTVFSAQYFNRLSTYVQNTLGKPGAKVVLAGPFPIPADLVLKDSELQLRNLLIKSVNACDDILALHSGERPFTIAGLKGQQGETLAAKVDIRTQPLHDTVGNPIRADIVVTTQRVRRNGQQENEFYETDVKLNQVAMFTNLERTPQAQAQTLFPNQQQVATPAPWVASVVITDVRNADGIQANTPEMYWFALSNAFRSTHGHAWARPFLPMTGVAKDMKDIGALGWMSALRNRIDTKAANFDDAQFGQLMLSQVQPNPVFQIDLNRMGETAQMDSLQLDAAGGPNAQKAAATIIRQINNLGGGGFERFFDHTTQPILERTGQVIDLGNWFDGDEKRDRRDLDNLAALNAAEGNENEFWGFYGAQLNPNLHPDLRNRQSRNYDRQYLGSTVTYTGKAERCTYNAKFIEALDRYLAEAGLQITMDNTSVLNSGQRFMGNSVIGNNMVSGQAQVHSAYAGTQGFNTQYQTGPSSFY.

Residues 1–29 (MIRDTATNTTQTQAAPQQAPAQQFTQAPQ) are compositionally biased toward low complexity. Residues 1–63 (MIRDTATNTT…FTRSGNVQGG (63 aa)) are disordered. A compositionally biased stretch (polar residues) spans 32–59 (PMQSTQSQPTPSYAGTGGINSQFTRSGN). Homotetramerization regions lie at residues 590–611 (QRFMGNSVIGNNMVSGQAQVHS) and 622–631 (QYQTGPSSFY).

Belongs to the Phikzvirus chimallin family. In terms of assembly, homotetramer. The tetrameric protomers further assemble as a square grid.

The protein localises to the host cytoplasm. In terms of biological role, self-assembles to form a proteinaceous shell that encloses the viral DNA and compartmentalizes proteins and DNA during viral infection. This micrometer-scale compartment contains narrow pores and is the site of viral replication, with the proteins involved in DNA replication localized inside. Provides a surface for docking of capsids during packaging. Probably protects the viral genome against host defenses. This Pseudomonas chlororaphis (Pseudomonas chlororaphis phage 201phi2-1) protein is Chimallin.